The following is a 598-amino-acid chain: UvrABC system protein C (598 aa).

Positions 13–92 (SSPGVYLMKD…IKKYQPRYNV (80 aa)) constitute a GIY-YIG domain. The UVR domain occupies 206 to 241 (DTTIANLEEAIKKASQEHKFEHAAALYRTLTLIRQT).

This sequence belongs to the UvrC family. In terms of assembly, interacts with UvrB in an incision complex.

It is found in the cytoplasm. Functionally, the UvrABC repair system catalyzes the recognition and processing of DNA lesions. UvrC both incises the 5' and 3' sides of the lesion. The N-terminal half is responsible for the 3' incision and the C-terminal half is responsible for the 5' incision. The polypeptide is UvrABC system protein C (Chlamydia muridarum (strain MoPn / Nigg)).